We begin with the raw amino-acid sequence, 434 residues long: V-type ATP synthase beta chain (434 aa).

It belongs to the ATPase alpha/beta chains family.

In terms of biological role, produces ATP from ADP in the presence of a proton gradient across the membrane. The V-type beta chain is a regulatory subunit. This chain is V-type ATP synthase beta chain (atpB), found in Borreliella burgdorferi (strain ATCC 35210 / DSM 4680 / CIP 102532 / B31) (Borrelia burgdorferi).